Here is a 115-residue protein sequence, read N- to C-terminus: Large ribosomal subunit protein bL20c (115 aa).

The protein belongs to the bacterial ribosomal protein bL20 family.

The protein resides in the plastid. It localises to the chloroplast. In terms of biological role, binds directly to 23S ribosomal RNA and is necessary for the in vitro assembly process of the 50S ribosomal subunit. It is not involved in the protein synthesizing functions of that subunit. This Gnetum parvifolium (Small-leaved jointfir) protein is Large ribosomal subunit protein bL20c.